We begin with the raw amino-acid sequence, 198 residues long: Recombination protein RecR (198 aa).

The segment at 56-71 (CHVCGNVDTGDPCGIC) adopts a C4-type zinc-finger fold. Positions 79-174 (RMLCVVEEVA…RLTQLAHGLP (96 aa)) constitute a Toprim domain.

The protein belongs to the RecR family.

In terms of biological role, may play a role in DNA repair. It seems to be involved in an RecBC-independent recombinational process of DNA repair. It may act with RecF and RecO. The polypeptide is Recombination protein RecR (Rhizorhabdus wittichii (strain DSM 6014 / CCUG 31198 / JCM 15750 / NBRC 105917 / EY 4224 / RW1) (Sphingomonas wittichii)).